A 98-amino-acid polypeptide reads, in one-letter code: Large ribosomal subunit protein bL21 (98 aa).

The protein belongs to the bacterial ribosomal protein bL21 family. Part of the 50S ribosomal subunit. Contacts protein L20.

Its function is as follows. This protein binds to 23S rRNA in the presence of protein L20. The chain is Large ribosomal subunit protein bL21 from Chloroherpeton thalassium (strain ATCC 35110 / GB-78).